The following is a 682-amino-acid chain: MELLRTITYQPAAGTKMCEQALGKACGGDSKKKRPQQPSEDGQSQAQVTPAAPHHHHHHSHSGPEISRIIVDPTTGKRYCRGKVLGKGGFAKCYEMTDLTNNKVYAAKIIPHSRVAKPHQREKIDKEIELHRILHHKHVVQFYHYFEDKENIYILLEYCSRRSMAHILKARKVLTEPEVRYYLRQIVSGLKYLHEQEILHRDLKLGNFFINEAMELKVGDFGLAARLEPLEHRRRTICGTPNYLSPEVLNKQGHGCESDIWALGCVMYTMLLGRPPFETTNLKETYRCIREARYTMPSSLLAPAKHLIASMLSKNPEDRPSLDDIIRHDFFLQGFTPDRLSSSCCHTVPDFHLSSPAKNFFKKAAAALFGGKKDKARYNDTHNKVSKEDEDIYKLRHDLKKTSITQQPSKHRTDEELQPPPTTFAKSGTSAVENKQQIGDAIRMIVRGTLGSCSSSSECLEDSTMGSVADTVARVLRGCLENMPEADCIPKEQLSTSFQWVTKWVDYSNKYGFGYQLSDHTVGVLFNNGAHMSLLPDKKTVHYYAELGQCSVFPATDAPEQFISQVTVLKYFSHYMEENLMDGGDLPSVTDIRRPRLYLLQWLKSDKALMMLFNDGTFQVNFYHDHTKIIICNQNEEYLLTYINEDRISTTFRLTTLLMSGCSLELKHRMEYALNMLLQRCN.

Positions 25 to 67 (ACGGDSKKKRPQQPSEDGQSQAQVTPAAPHHHHHHSHSGPEIS) are disordered. Over residues 36–48 (QQPSEDGQSQAQV) the composition is skewed to polar residues. Residues 79 to 331 (YCRGKVLGKG…LDDIIRHDFF (253 aa)) form the Protein kinase domain. Residues 85–93 (LGKGGFAKC) and Lys108 contribute to the ATP site. Asp202 serves as the catalytic Proton acceptor. Thr236 is modified (phosphothreonine). A disordered region spans residues 402 to 430 (TSITQQPSKHRTDEELQPPPTTFAKSGTS). POLO box domains are found at residues 500 to 578 (WVTK…YMEE) and 598 to 682 (YLLQ…QRCN).

Belongs to the protein kinase superfamily. Ser/Thr protein kinase family. CDC5/Polo subfamily. Interacts with CIB1. Interacts with NSF; causing NSF dissociation from GRIA2. Catalytic activity is enhanced by phosphorylation of Thr-236.

The protein resides in the cytoplasm. It localises to the cytoskeleton. It is found in the microtubule organizing center. The protein localises to the centrosome. Its subcellular location is the centriole. The protein resides in the cell projection. It localises to the dendrite. It carries out the reaction L-seryl-[protein] + ATP = O-phospho-L-seryl-[protein] + ADP + H(+). The enzyme catalyses L-threonyl-[protein] + ATP = O-phospho-L-threonyl-[protein] + ADP + H(+). With respect to regulation, activated by phosphorylation of Thr-236. Once activated, activity is stimulated by binding target proteins. Functionally, tumor suppressor serine/threonine-protein kinase involved in synaptic plasticity, centriole duplication and G1/S phase transition. Polo-like kinases act by binding and phosphorylating proteins that are already phosphorylated on a specific motif recognized by the POLO box domains. Phosphorylates CPAP, NPM1, RAPGEF2, RASGRF1, SNCA, SIPA1L1 and SYNGAP1. Plays a key role in synaptic plasticity and memory by regulating the Ras and Rap protein signaling: required for overactivity-dependent spine remodeling by phosphorylating the Ras activator RASGRF1 and the Rap inhibitor SIPA1L1 leading to their degradation by the proteasome. Conversely, phosphorylates the Rap activator RAPGEF2 and the Ras inhibitor SYNGAP1, promoting their activity. Also regulates synaptic plasticity independently of kinase activity, via its interaction with NSF that disrupts the interaction between NSF and the GRIA2 subunit of AMPARs, leading to a rapid rundown of AMPAR-mediated current that occludes long term depression. Required for procentriole formation and centriole duplication by phosphorylating CPAP and NPM1, respectively. Its induction by p53/TP53 suggests that it may participate in the mitotic checkpoint following stress. The chain is Serine/threonine-protein kinase PLK2 (Plk2) from Rattus norvegicus (Rat).